The following is a 728-amino-acid chain: Polyribonucleotide nucleotidyltransferase (728 aa).

Residues aspartate 487 and aspartate 493 each coordinate Mg(2+). The KH domain occupies 554–613 (PRIEVITVPTDKIREVIGTGGKVIREIVEKTGAKVDISDDGTIKVASSDGESIRKAIAWI). The 69-residue stretch at 623 to 691 (GKIYEGTVVK…DRGKVRLSMK (69 aa)) folds into the S1 motif domain. Residues 697–707 (TGEEIVYENEP) are compositionally biased toward acidic residues. The interval 697 to 728 (TGEEIVYENEPAEQPREKREGGGGRGRRRERD) is disordered. Positions 709–718 (EQPREKREGG) are enriched in basic and acidic residues.

Belongs to the polyribonucleotide nucleotidyltransferase family. Mg(2+) serves as cofactor.

It localises to the cytoplasm. It catalyses the reaction RNA(n+1) + phosphate = RNA(n) + a ribonucleoside 5'-diphosphate. Functionally, involved in mRNA degradation. Catalyzes the phosphorolysis of single-stranded polyribonucleotides processively in the 3'- to 5'-direction. This chain is Polyribonucleotide nucleotidyltransferase, found in Parvibaculum lavamentivorans (strain DS-1 / DSM 13023 / NCIMB 13966).